The chain runs to 198 residues: uncharacterized protein (198 aa).

Positions 1 to 110 (MTGYFLPPQT…GTTVSDDFEG (110 aa)) constitute a PA14 domain.

It belongs to the flocculin family.

This is an uncharacterized protein from Saccharomyces cerevisiae (strain ATCC 204508 / S288c) (Baker's yeast).